The chain runs to 298 residues: 3-deoxy-manno-octulosonate cytidylyltransferase (298 aa).

A helical transmembrane segment spans residues 22 to 42 (VWVLHGLALGAAAAAAAVAYL).

This sequence belongs to the KdsB family. It depends on Mg(2+) as a cofactor. As to expression, ubiquitous.

It is found in the membrane. It catalyses the reaction 3-deoxy-alpha-D-manno-oct-2-ulosonate + CTP = CMP-3-deoxy-beta-D-manno-octulosonate + diphosphate. It functions in the pathway nucleotide-sugar biosynthesis; CMP-3-deoxy-D-manno-octulosonate biosynthesis; CMP-3-deoxy-D-manno-octulosonate from 3-deoxy-D-manno-octulosonate and CTP: step 1/1. Functionally, catalyzes the production of the sugar nucleotide CMP-3-deoxy-D-manno-octulosonate (CMP-KDO). CTP is the preferred nucleotide donor, and it can partially be replaced with UTP but not with ATP. Activates KDO during the biosynthesis of rhamnogalacturonan II (RG-II), a structurally complex pectic polysaccharide of the primary cell wall. RG-II is essential for the cell wall integrity of rapidly growing tissues and pollen tube growth and elongation. This Zea mays (Maize) protein is 3-deoxy-manno-octulosonate cytidylyltransferase.